The chain runs to 51 residues: Large ribosomal subunit protein eL39 (51 aa).

Positions methionine 1 to lysine 15 are enriched in basic residues. The disordered stretch occupies residues methionine 1–arginine 21.

The protein belongs to the eukaryotic ribosomal protein eL39 family. Component of the large ribosomal subunit (LSU). Mature yeast ribosomes consist of a small (40S) and a large (60S) subunit. The 40S small subunit contains 1 molecule of ribosomal RNA (18S rRNA) and at least 33 different proteins. The large 60S subunit contains 3 rRNA molecules (25S, 5.8S and 5S rRNA) and at least 46 different proteins. eL39 interacts with yih1.

Its subcellular location is the cytoplasm. In terms of biological role, component of the ribosome, a large ribonucleoprotein complex responsible for the synthesis of proteins in the cell. The small ribosomal subunit (SSU) binds messenger RNAs (mRNAs) and translates the encoded message by selecting cognate aminoacyl-transfer RNA (tRNA) molecules. The large subunit (LSU) contains the ribosomal catalytic site termed the peptidyl transferase center (PTC), which catalyzes the formation of peptide bonds, thereby polymerizing the amino acids delivered by tRNAs into a polypeptide chain. The nascent polypeptides leave the ribosome through a tunnel in the LSU and interact with protein factors that function in enzymatic processing, targeting, and the membrane insertion of nascent chains at the exit of the ribosomal tunnel. The chain is Large ribosomal subunit protein eL39 (rpl39) from Schizosaccharomyces pombe (strain 972 / ATCC 24843) (Fission yeast).